We begin with the raw amino-acid sequence, 188 residues long: GMP synthase [glutamine-hydrolyzing] subunit A (188 aa).

The region spanning K2–R188 is the Glutamine amidotransferase type-1 domain. Catalysis depends on C79, which acts as the Nucleophile. Residues H166 and E168 contribute to the active site.

Heterodimer composed of a glutamine amidotransferase subunit (A) and a GMP-binding subunit (B).

It carries out the reaction XMP + L-glutamine + ATP + H2O = GMP + L-glutamate + AMP + diphosphate + 2 H(+). Its pathway is purine metabolism; GMP biosynthesis; GMP from XMP (L-Gln route): step 1/1. Catalyzes the synthesis of GMP from XMP. This chain is GMP synthase [glutamine-hydrolyzing] subunit A, found in Picrophilus torridus (strain ATCC 700027 / DSM 9790 / JCM 10055 / NBRC 100828 / KAW 2/3).